The sequence spans 217 residues: Eukaryotic translation initiation factor 4E (217 aa).

The span at 1 to 11 (MATVEPETTPT) shows a compositional bias: low complexity. Residues 1-27 (MATVEPETTPTTNPPPAEEEKTESNQE) form a disordered region. The residue at position 2 (A2) is an N-acetylalanine. Phosphothreonine is present on T22. The EIF4EBP1/2/3 binding stretch occupies residues 37–40 (HPLQ). An mRNA-binding site is contributed by 56-57 (WQ). The interval 73 to 77 (WALYN) is EIF4EBP1/2/3 binding. 102–103 (WE) contributes to the mRNA binding site. Residues 132-139 (ETLLCLIG) form an EIF4EBP1/2/3 binding region. Residues 157–162 (RAKGDK) and 205–207 (TKS) each bind mRNA. S209 is modified (phosphoserine; by PKC and MKNK2).

It belongs to the eukaryotic initiation factor 4E family. In terms of assembly, eIF4F is a multi-subunit complex, the composition of which varies with external and internal environmental conditions. It is composed of at least EIF4A, EIF4E and EIF4G1/EIF4G3. EIF4E is also known to interact with other partners. Interacts with EIF4ENIF1/4E-T; promotes recruitment to P-bodies and import into the nucleus. Hypophosphorylated EIF4EBP1, EIF4EBP2 and EIF4EBP3 compete with EIF4G1/EIF4G3 to interact with EIF4E; insulin stimulated MAP-kinase (MAPK1 and MAPK3) phosphorylation of EIF4EBP1 causes dissociation of the complex allowing EIF4G1/EIF4G3 to bind and consequent initiation of translation. Interacts mutually exclusive with EIF4A1 or EIF4A2. Interacts with NGDN and PIWIL2. Component of the CYFIP1-EIF4E-FMR1 complex composed of CYFIP, EIF4E and FMR1. Interacts directly with CYFIP1. Interacts with CLOCK. Binds to MKNK2 in nucleus. Interacts with LIMD1, WTIP and AJUBA. Interacts with APOBEC3G in an RNA-dependent manner. Interacts with LARP1. Interacts with METTL3. Interacts with RBM24; this interaction prevents EIF4E from binding to p53/TP53 mRNA and inhibits the assembly of translation initiation complex. Interacts with DDX3X; interaction is direct and in an RNA-independent manner; this interaction enhances EIF4E cap-binding ability and is required for the repression of cap-dependent translation and the increase of IRES-mediated translation. DDX3X competes with EIF4G1 for interaction with EIF4E. Interacts with EIF4G1; which in a mutual exclusive interaction associates either with EIF1 or with EIF4E on a common binding site. Interacts with BTG4 and CNOT7. Interacts with LRPPRC (via N-terminus); the interaction promotes association of EIF4E with 4ESE-containing mRNAs. Interacts with mRNA cleavage enzyme CPSF3 and its cofactor CPSF1. Interacts (via RING-type zinc finger) with PML; the interaction results in conformational changes of both interacting proteins and reduces EIF4E affinity for the 5' m7G cap of mRNA, thus reducing EIF4E-mediated mRNA nuclear export. Interacts with homeobox protein HHEX/PRH; the interaction inhibits EIF4E-mediated mRNA nuclear export. Interacts with homeobox protein HOXA9; the interaction positively regulates EIF4E-mediated mRNA nuclear export. Interacts with homeobox protein EMX2. As to quaternary structure, (Microbial infection) Interacts with murine norovirus viral genome-linked protein; this interaction plays a role in translation of viral proteins. Phosphorylation increases the ability of the protein to bind to mRNA caps and to form the eIF4F complex. Phosphorylation also enhances its mRNA transport function. Phosphorylation at Ser-209 is not essential for protein synthesis.

It is found in the cytoplasm. Its subcellular location is the P-body. The protein localises to the stress granule. The protein resides in the nucleus. It localises to the nucleus speckle. It is found in the nuclear body. Acts in the cytoplasm to initiate and regulate protein synthesis and is required in the nucleus for export of a subset of mRNAs from the nucleus to the cytoplasm which promotes processes such as RNA capping, processing and splicing. Component of the protein complex eIF4F, which is involved in the recognition of the mRNA cap, ATP-dependent unwinding of 5'-terminal secondary structure and recruitment of mRNA to the ribosome. This protein recognizes and binds the 7-methylguanosine (m7G)-containing mRNA cap during an early step in the initiation of protein synthesis and facilitates ribosome binding by inducing the unwinding of the mRNAs secondary structures. Together with EIF4G1, antagonizes the scanning promoted by EIF1-EIF4G1 and is required for TISU translation, a process where the TISU element recognition makes scanning unnecessary. In addition to its role in translation initiation, also acts as a regulator of translation and stability in the cytoplasm. Component of the CYFIP1-EIF4E-FMR1 complex which binds to the mRNA cap and mediates translational repression: in the complex, EIF4E mediates the binding to the mRNA cap. Component of a multiprotein complex that sequesters and represses translation of proneurogenic factors during neurogenesis. In P-bodies, component of a complex that mediates the storage of translationally inactive mRNAs in the cytoplasm and prevents their degradation. May play an important role in spermatogenesis through translational regulation of stage-specific mRNAs during germ cell development. As well as its roles in translation, also involved in mRNA nucleocytoplasmic transport. Its role in mRNA export from the nucleus to the cytoplasm relies on its ability to bind the m7G cap of RNAs and on the presence of the 50-nucleotide EIF4E sensitivity element (4ESE) in the 3'UTR of sensitive transcripts. Interaction with the 4ESE is mediated by LRPPRC which binds simultaneously to both EIF4E and the 4ESE, thereby acting as a platform for assembly for the RNA export complex. EIF4E-dependent mRNA export is independent of ongoing protein or RNA synthesis and is also NFX1-independent but is XPO1-dependent with LRPPRC interacting with XPO1 to form an EIF4E-dependent mRNA export complex. Alters the composition of the cytoplasmic face of the nuclear pore to promote RNA export by reducing RANBP2 expression, relocalizing nucleoporin NUP214 and increasing expression of RANBP1 and RNA export factors DDX19 and GLE1. Promotes the nuclear export of cyclin CCND1 mRNA. Promotes the nuclear export of NOS2/iNOS mRNA. Promotes the nuclear export of MDM2 mRNA. Also promotes the export of additional mRNAs, including others involved in the cell cycle. In the nucleus, binds to capped splice factor-encoding mRNAs and stimulates their nuclear export to enhance splice factor production by increasing their cytoplasmic availability to the translation machinery. May also regulate splicing through interaction with the spliceosome in an RNA and m7G cap-dependent manner. Also binds to some pre-mRNAs and may play a role in their recruitment to the spliceosome. Promotes steady-state capping of a subset of coding and non-coding RNAs by mediating nuclear export of capping machinery mRNAs including RNMT, RNGTT and RAMAC to enhance their translation. Stimulates mRNA 3'-end processing by promoting the expression of several core cleavage complex factors required for mRNA cleavage and polyadenylation, and may also have a direct effect through its interaction with the CPSF3 cleavage enzyme. Rescues cells from apoptosis by promoting activation of serine/threonine-protein kinase AKT1 through mRNA export of NBS1 which potentiates AKT1 phosphorylation and also through mRNA export of AKT1 effectors, allowing for increased production of these proteins. In Mus musculus (Mouse), this protein is Eukaryotic translation initiation factor 4E.